We begin with the raw amino-acid sequence, 103 residues long: MTSFNIFFLLFFSFVIFFLGILGIFITRKNIIIILVSIELMLLAVNFNFAIFSVLLEDMFGQVFILYTLTLAGAEAAIGLAILIIFYRIRGIISVNFVTSLKG.

Helical transmembrane passes span 6 to 26 (IFFL…GIFI), 31 to 51 (IIII…NFAI), and 65 to 85 (ILYT…ILII).

This sequence belongs to the complex I subunit 4L family.

It localises to the mitochondrion membrane. The enzyme catalyses a ubiquinone + NADH + 5 H(+)(in) = a ubiquinol + NAD(+) + 4 H(+)(out). In terms of biological role, core subunit of the mitochondrial membrane respiratory chain NADH dehydrogenase (Complex I) that is believed to belong to the minimal assembly required for catalysis. Complex I functions in the transfer of electrons from NADH to the respiratory chain. The immediate electron acceptor for the enzyme is believed to be ubiquinone. The protein is NADH-ubiquinone oxidoreductase chain 4L (ND4L) of Acanthamoeba castellanii (Amoeba).